We begin with the raw amino-acid sequence, 132 residues long: Small ribosomal subunit protein uS8 (132 aa).

Belongs to the universal ribosomal protein uS8 family. Part of the 30S ribosomal subunit. Contacts proteins S5 and S12.

Functionally, one of the primary rRNA binding proteins, it binds directly to 16S rRNA central domain where it helps coordinate assembly of the platform of the 30S subunit. The sequence is that of Small ribosomal subunit protein uS8 from Parvibaculum lavamentivorans (strain DS-1 / DSM 13023 / NCIMB 13966).